The primary structure comprises 416 residues: CinA-like protein (416 aa).

The protein belongs to the CinA family.

The chain is CinA-like protein from Trichormus variabilis (strain ATCC 29413 / PCC 7937) (Anabaena variabilis).